A 327-amino-acid chain; its full sequence is Serpentine receptor class gamma-2 (327 aa).

The next 6 helical transmembrane spans lie at 35–55 (LVQF…LYIL), 70–90 (ILFI…IFFA), 157–177 (MKYA…NIII), 181–203 (LPVY…ATMT), 244–264 (IASF…SLFA), and 277–297 (FLLP…MVMA).

It belongs to the nematode receptor-like protein srg family.

Its subcellular location is the membrane. The sequence is that of Serpentine receptor class gamma-2 (srg-2) from Caenorhabditis elegans.